The chain runs to 451 residues: Cobalamin reductase PduS (451 aa).

4Fe-4S ferredoxin-type domains follow at residues 255–284 and 300–330; these read TVLSVAKTVCEQCRLCTDLCPRHLIGHELS and PQLLLTALTCSECNVCESVACPVGISPMRIN. [4Fe-4S] cluster is bound by residues cysteine 264, cysteine 267, cysteine 270, cysteine 274, cysteine 309, cysteine 312, cysteine 315, and cysteine 320.

Belongs to the PduS cobalamin reductase family. In terms of assembly, monomer, forms a complex with PduO. Interacts with PduT, probably via the N-terminus of PduS. It depends on [4Fe-4S] cluster as a cofactor. FMN serves as cofactor.

It localises to the bacterial microcompartment. Its pathway is polyol metabolism; 1,2-propanediol degradation. A bifunctional cobalamin reductase that converts cob(III)alamin to cob(II)alamin and then to cob(I)alamin in the bacterial microcompartment (BMC) dedicated to 1,2-propanediol (1,2-PD) degradation. PduS and PduO allow regeneration of the adenosylcobalamin cofactor within the BMC. Cobalamin reduction probably occurs spontaneously in the presence of free reduced flavin nucleotides, this protein may be involved in electron transfer for this reduction. Functionally, expression of a cosmid containing the full 21-gene pdu operon in E.coli allows E.coli to grow on 1,2-propanediol (1,2-PD) with the appearance of BMCs in its cytoplasm. In terms of biological role, the 1,2-PD-specific bacterial microcompartment (BMC) concentrates low levels of 1,2-PD catabolic enzymes, concentrates volatile reaction intermediates thus enhancing pathway flux and keeps the level of toxic, mutagenic propionaldehyde low. The polypeptide is Cobalamin reductase PduS (Citrobacter freundii).